A 305-amino-acid polypeptide reads, in one-letter code: NADH-cytochrome b5 reductase 1 (305 aa).

The helical transmembrane segment at 8 to 28 (VLLASLGVGLVTLLGLAVGSY) threads the bilayer. In terms of domain architecture, FAD-binding FR-type spans 44-156 (NEKYLLRLLD…RGPSGLLTYT (113 aa)). Residues 136–166 (DSLKVGDVVEFRGPSGLLTYTGKGHFNIQPN) and 175–210 (VAKKLGMIAGGTGITPMLQLIRAILKVPEDPTQCFL) each bind FAD.

The protein belongs to the flavoprotein pyridine nucleotide cytochrome reductase family. Requires FAD as cofactor. In terms of tissue distribution, widely expressed.

It localises to the membrane. It catalyses the reaction 2 Fe(III)-[cytochrome b5] + NADH = 2 Fe(II)-[cytochrome b5] + NAD(+) + H(+). Its function is as follows. NADH-cytochrome b5 reductases are involved in desaturation and elongation of fatty acids, cholesterol biosynthesis, drug metabolism, and, in erythrocyte, methemoglobin reduction. The sequence is that of NADH-cytochrome b5 reductase 1 (CYB5R1) from Homo sapiens (Human).